Consider the following 159-residue polypeptide: 2-C-methyl-D-erythritol 2,4-cyclodiphosphate synthase (159 aa).

2 residues coordinate a divalent metal cation: Asp-8 and His-10. Residues 8 to 10 (DVH) and 34 to 35 (HS) each bind 4-CDP-2-C-methyl-D-erythritol 2-phosphate. His-42 contributes to the a divalent metal cation binding site. 4-CDP-2-C-methyl-D-erythritol 2-phosphate-binding positions include 56–58 (DIG), 61–65 (FPDTD), 100–106 (AQAPRML), 132–135 (TTTE), Phe-139, and Arg-142.

It belongs to the IspF family. In terms of assembly, homotrimer. It depends on a divalent metal cation as a cofactor.

It carries out the reaction 4-CDP-2-C-methyl-D-erythritol 2-phosphate = 2-C-methyl-D-erythritol 2,4-cyclic diphosphate + CMP. Its pathway is isoprenoid biosynthesis; isopentenyl diphosphate biosynthesis via DXP pathway; isopentenyl diphosphate from 1-deoxy-D-xylulose 5-phosphate: step 4/6. Functionally, involved in the biosynthesis of isopentenyl diphosphate (IPP) and dimethylallyl diphosphate (DMAPP), two major building blocks of isoprenoid compounds. Catalyzes the conversion of 4-diphosphocytidyl-2-C-methyl-D-erythritol 2-phosphate (CDP-ME2P) to 2-C-methyl-D-erythritol 2,4-cyclodiphosphate (ME-CPP) with a corresponding release of cytidine 5-monophosphate (CMP). The protein is 2-C-methyl-D-erythritol 2,4-cyclodiphosphate synthase of Escherichia coli O45:K1 (strain S88 / ExPEC).